We begin with the raw amino-acid sequence, 178 residues long: MSSNECFKCGRSGHWARECPTGGGRGRGMRSRGRGGFTSDRGFQFVSSSLPDICYRCGESGHLAKDCDLQEDEACYNCGRGGHIAKDCKEPKREREQCCYNCGKPGHLARDCDHADEQKCYSCGEFGHIQKDCTKVKCYRCGETGHVAINCSKTSEVNCYRCGESGHLARECTIEATA.

Serine 2 carries the N-acetylserine modification. Residues 4-21 (NECFKCGRSGHWARECPT) form a CCHC-type 1 zinc finger. At lysine 8 the chain carries N6-acetyllysine. Omega-N-methylarginine; by PRMT1 is present on residues arginine 25 and arginine 27. The segment at 25-38 (RGRGMRSRGRGGFT) is RNA-binding Arg/Gly-rich region (RGG-box). An omega-N-methylarginine mark is found at arginine 32 and arginine 34. Serine 49 is modified (phosphoserine). 6 consecutive CCHC-type zinc fingers follow at residues 52 to 69 (DICY…DCDL), 72 to 90 (DEAC…DCKE), 97 to 114 (QCCY…DCDH), 118 to 135 (QKCY…DCTK), 136 to 153 (VKCY…NCSK), and 157 to 174 (VNCY…ECTI). Omega-N-methylarginine is present on residues aspartate 72, glycine 79, and arginine 80.

As to quaternary structure, associates with the 40S ribosomal subunit, the 80S ribosome and with polysomes. In terms of processing, arginine methylation by PRMT1 in the Arg/Gly-rich region impedes RNA binding.

It is found in the nucleus. The protein resides in the cytoplasm. The protein localises to the endoplasmic reticulum. Single-stranded DNA-binding protein that preferentially binds to the sterol regulatory element (SRE) sequence 5'-GTGCGGTG-3', and thereby mediates transcriptional repression. Has a role as transactivator of the Myc promoter. Binds single-stranded RNA in a sequence-specific manner. Binds G-rich elements in target mRNA coding sequences. Prevents G-quadruplex structure formation in vitro, suggesting a role in supporting translation by resolving stable structures on mRNAs. This chain is CCHC-type zinc finger nucleic acid binding protein, found in Mus musculus (Mouse).